Here is a 614-residue protein sequence, read N- to C-terminus: Baeyer-Villiger monooxygenase peniC (614 aa).

Residues E99, 107 to 110 (TWHW), D119, and Y125 contribute to the FAD site. Residues 255 to 261 (TGASGVQ), 278 to 279 (RT), and 398 to 399 (KR) each bind NADP(+).

Belongs to the FAD-binding monooxygenase family. FAD serves as cofactor.

The enzyme catalyses gamma-lactone-2-keto[5.5.5.5]fenestrane + NADPH + O2 + H(+) = penifulvin A + NADP(+) + H2O. The protein operates within secondary metabolite biosynthesis; terpenoid biosynthesis. Functionally, baeyer-Villiger monooxygenase; part of the gene cluster that mediates the biosynthesis of penifulvin A, a potent insecticidal sesquiterpene that features a [5.5.5.6]dioxafenestrane ring. Within the pathway, peniC is responsible for the final regioselective Baeyer-Villiger oxidation of gamma-lactone-2-keto[5.5.5.5]fenestran between C1 and C2 to form the delta-lactone moiety of penifulvin A. The first step of the pathway is performed by the sesquiterpene cyclase peniA that generates the angular triquinane scaffold silphinene via cyclization of the linear farnesyl pyrophosphate (FPP). The cytochrome P450 monooxygenase peniB and the flavin-dependent monooxygenase peniC then catalyze a series of oxidation reactions to transform silphinene into penifulvin A. This chain is Baeyer-Villiger monooxygenase peniC, found in Penicillium patulum (Penicillium griseofulvum).